The sequence spans 638 residues: Threonine--tRNA ligase (638 aa).

In terms of domain architecture, TGS spans 1 to 59; it reads MEKIKVKIKGKEYEVEKGTPLGKIFELAGIKDALGGVINGKIIDLQTPVRESGEIKPVY. A catalytic region spans residues 243–536; the sequence is DHRRLGKELE…LLEHYAGLLP (294 aa). Zn(2+)-binding residues include C336, H387, and H513.

It belongs to the class-II aminoacyl-tRNA synthetase family. Homodimer. The cofactor is Zn(2+).

It is found in the cytoplasm. It catalyses the reaction tRNA(Thr) + L-threonine + ATP = L-threonyl-tRNA(Thr) + AMP + diphosphate + H(+). Its function is as follows. Catalyzes the attachment of threonine to tRNA(Thr) in a two-step reaction: L-threonine is first activated by ATP to form Thr-AMP and then transferred to the acceptor end of tRNA(Thr). Also edits incorrectly charged L-seryl-tRNA(Thr). The chain is Threonine--tRNA ligase from Aquifex aeolicus (strain VF5).